A 361-amino-acid polypeptide reads, in one-letter code: MSQNSLRLVEDNSVDKTKALDAALSQIERAFGKGSIMRLGQNDQVVEIETVSTGSLSLDIALGVGGLPKGRIVEIYGPESSGKTTLALHTIAEAQKKGGICAFVDAEHALDPVYARKLGVDLENLLISQPDTGEQALEITDTLVRSGAIDVLVVDSVAALTPRAEIEGEMGDSLPGLQARLMSQALRKLTGSISRSNCMVIFINQIRMKIGVMFGSPETTTGGNALKFYASVRLDIRRIGSIKERDEVVGNQTRVKVVKNKLAPPFKQVEFDIMYGAGVSKVGELVDLGVKAGVVEKSGAWFSYNSQRLGQGRENAKQYLKDNPEVAREIETTLRQNAGLIAEQFLDDGGPEEDAAGAAEM.

77 to 84 contributes to the ATP binding site; that stretch reads GPESSGKT.

It belongs to the RecA family.

Its subcellular location is the cytoplasm. Functionally, can catalyze the hydrolysis of ATP in the presence of single-stranded DNA, the ATP-dependent uptake of single-stranded DNA by duplex DNA, and the ATP-dependent hybridization of homologous single-stranded DNAs. It interacts with LexA causing its activation and leading to its autocatalytic cleavage. The sequence is that of Protein RecA from Brucella abortus (strain S19).